The chain runs to 444 residues: 23S rRNA (uracil(1939)-C(5))-methyltransferase RlmD (444 aa).

In terms of domain architecture, TRAM spans lysine 5 to serine 64. Residues cysteine 77, cysteine 83, cysteine 86, and cysteine 166 each coordinate [4Fe-4S] cluster. S-adenosyl-L-methionine contacts are provided by glutamine 276, phenylalanine 305, asparagine 310, glutamate 326, asparagine 353, and aspartate 374. Cysteine 400 acts as the Nucleophile in catalysis.

It belongs to the class I-like SAM-binding methyltransferase superfamily. RNA M5U methyltransferase family. RlmD subfamily.

It carries out the reaction uridine(1939) in 23S rRNA + S-adenosyl-L-methionine = 5-methyluridine(1939) in 23S rRNA + S-adenosyl-L-homocysteine + H(+). In terms of biological role, catalyzes the formation of 5-methyl-uridine at position 1939 (m5U1939) in 23S rRNA. The polypeptide is 23S rRNA (uracil(1939)-C(5))-methyltransferase RlmD (Legionella pneumophila (strain Paris)).